The chain runs to 377 residues: Dihydroorotate dehydrogenase (quinone) (377 aa).

FMN-binding positions include 82 to 86 and Thr106; that span reads AGFDK. Residue Lys86 participates in substrate binding. 131-135 contributes to the substrate binding site; that stretch reads NRMGF. Asn159 and Asn192 together coordinate FMN. Asn192 is a binding site for substrate. Ser195 functions as the Nucleophile in the catalytic mechanism. Asn197 contacts substrate. FMN-binding residues include Lys228 and Thr256. 257-258 contacts substrate; it reads NT. FMN contacts are provided by residues Gly282, Gly311, and 332-333; that span reads YT.

It belongs to the dihydroorotate dehydrogenase family. Type 2 subfamily. Monomer. FMN serves as cofactor.

It localises to the cell membrane. It catalyses the reaction (S)-dihydroorotate + a quinone = orotate + a quinol. It functions in the pathway pyrimidine metabolism; UMP biosynthesis via de novo pathway; orotate from (S)-dihydroorotate (quinone route): step 1/1. Functionally, catalyzes the conversion of dihydroorotate to orotate with quinone as electron acceptor. The chain is Dihydroorotate dehydrogenase (quinone) from Corynebacterium efficiens (strain DSM 44549 / YS-314 / AJ 12310 / JCM 11189 / NBRC 100395).